Here is a 938-residue protein sequence, read N- to C-terminus: ATP-dependent RNA helicase DDX42 (938 aa).

The segment covering 1 to 18 (MNWNKGGPGTKRGFGFGG) has biased composition (gly residues). A disordered region spans residues 1–114 (MNWNKGGPGT…KPVDSDSDDD (114 aa)). Residue Lys-5 is modified to N6-acetyllysine. At Arg-12 the chain carries Omega-N-methylarginine. Positions 35 to 52 (SHSAFGATSSSSGFGKSA) are enriched in low complexity. The residue at position 58 (Ser-58) is a Phosphoserine. Residues 70–84 (DEENAYFEDEEEDSS) are compositionally biased toward acidic residues. Phosphoserine occurs at positions 96, 104, 109, and 111. Residues 116-157 (LEAFMAEVEDQAARDMKRLEEKDKERKNVKGIRDDIEEEDDQ) adopt a coiled-coil conformation. Positions 182–203 (EYDSDGNPIAPTKKIIDPLPPI) are disordered. Position 185 is a phosphoserine (Ser-185). The short motif at 253–281 (SSFAHFGFDEQLMHQIRKSEYTQPTPIQC) is the Q motif element. One can recognise a Helicase ATP-binding domain in the interval 284–459 (VPVALSGRDM…RDILIDPIRV (176 aa)). 297-304 (AKTGSGKT) contributes to the ATP binding site. A DEAD box motif is present at residues 407–410 (DEAD). The Helicase C-terminal domain occupies 487–632 (WLTRRLVEFT…HVSKELLDLA (146 aa)). Polar residues-rich tracts occupy residues 737–757 (LNSV…SPVT) and 786–798 (GVNN…NSRE). The segment at 737–938 (LNSVPTNSAQ…PKRKKSRWDS (202 aa)) is disordered. Residues 738–833 (NSVPTNSAQQ…TGNRHSDSPR (96 aa)) are necessary for interaction with TP53BP2. Ser-754 bears the Phosphoserine mark. Residues 820–920 (SHGETGNRHS…KVDSKTDKTA (101 aa)) show a composition bias toward basic and acidic residues. Lys-899 participates in a covalent cross-link: Glycyl lysine isopeptide (Lys-Gly) (interchain with G-Cter in SUMO2).

Belongs to the DEAD box helicase family. DDX42 subfamily. As to quaternary structure, transient component of the SF3B subcomplex of the 17S U2 SnRNP complex. Interacts (via the C-terminus) with TP53BP2; the interaction is not inhibitied by TP53BP2 ubiquitination and is independent of p53/TP53. As to expression, expressed in several cell lines (at protein level). Expressed in liver, lung, tonsil, thymus, muscle and pancreatic islets.

The protein localises to the cytoplasm. Its subcellular location is the nucleus. It localises to the cajal body. It is found in the nucleus speckle. It carries out the reaction ATP + H2O = ADP + phosphate + H(+). Functionally, ATP-dependent RNA helicase that binds to partially double-stranded RNAs (dsRNAs) in order to unwind RNA secondary structures. Unwinding is promoted in the presence of single-strand binding proteins. Also mediates RNA duplex formation thereby displacing the single-strand RNA binding protein. ATP and ADP modulate its activity: ATP binding and hydrolysis by DDX42 triggers RNA strand separation, whereas the ADP-bound form of the protein triggers annealing of complementary RNA strands. Required for assembly of the 17S U2 SnRNP complex of the spliceosome, a large ribonucleoprotein complex that removes introns from transcribed pre-mRNAs: DDX42 associates transiently with the SF3B subcomplex of the 17S U2 SnRNP complex and is released after fulfilling its role in the assembly of 17S U2 SnRNP. Involved in the survival of cells by interacting with TP53BP2 and thereby counteracting the apoptosis-stimulating activity of TP53BP2. Relocalizes TP53BP2 to the cytoplasm. In Homo sapiens (Human), this protein is ATP-dependent RNA helicase DDX42.